We begin with the raw amino-acid sequence, 443 residues long: Threonine/serine transporter TdcC (443 aa).

The next 11 membrane-spanning stretches (helical) occupy residues 22 to 42 (TTWTLGLFGTAIGAGVLFFPI), 44 to 64 (AGFGGLIPILLMLVLAYPIAF), 97 to 117 (GVVITFLYFFAICPLLWIYGV), 140 to 160 (FVALFLLLLMAFVIWFGKDLM), 163 to 183 (VMSYLVWPFIASLVLISLSLI), 207 to 227 (ILITVWLGISIMVFSFNFSPI), 261 to 281 (MLMVAVVMFFAFSCLFTLSPA), 311 to 331 (FAITLEYAASIIALVAIFKSF), 366 to 386 (ISMIFIMGSTWVVAYANPNIL), 389 to 409 (IEAMGAPIIASLLCLLPMYAI), and 423 to 443 (DNVFVTVIGLLTILNIVYKLF).

Belongs to the amino acid/polyamine transporter 2 family. SdaC/TdcC subfamily.

It localises to the cell inner membrane. It carries out the reaction L-threonine(in) + H(+)(in) = L-threonine(out) + H(+)(out). The catalysed reaction is L-serine(in) + H(+)(in) = L-serine(out) + H(+)(out). Its function is as follows. Involved in the import of threonine and serine into the cell, with the concomitant import of a proton (symport system). The polypeptide is Threonine/serine transporter TdcC (Shigella sonnei (strain Ss046)).